A 518-amino-acid polypeptide reads, in one-letter code: Anthranilate synthase component 1 (518 aa).

L-tryptophan contacts are provided by residues Ser41 and 291–293 (PYM). 328 to 329 (GS) contributes to the chorismate binding site. Residue Glu361 coordinates Mg(2+). Chorismate contacts are provided by residues Tyr449, Arg469, 483-485 (GCG), and Gly485. Glu498 is a binding site for Mg(2+).

The protein belongs to the anthranilate synthase component I family. As to quaternary structure, heterotetramer consisting of two non-identical subunits: a beta subunit (TrpG) and a large alpha subunit (TrpE). Requires Mg(2+) as cofactor.

The catalysed reaction is chorismate + L-glutamine = anthranilate + pyruvate + L-glutamate + H(+). It functions in the pathway amino-acid biosynthesis; L-tryptophan biosynthesis; L-tryptophan from chorismate: step 1/5. Feedback inhibited by tryptophan. In terms of biological role, part of a heterotetrameric complex that catalyzes the two-step biosynthesis of anthranilate, an intermediate in the biosynthesis of L-tryptophan. In the first step, the glutamine-binding beta subunit (TrpG) of anthranilate synthase (AS) provides the glutamine amidotransferase activity which generates ammonia as a substrate that, along with chorismate, is used in the second step, catalyzed by the large alpha subunit of AS (TrpE) to produce anthranilate. In the absence of TrpG, TrpE can synthesize anthranilate directly from chorismate and high concentrations of ammonia. This Haemophilus influenzae (strain ATCC 51907 / DSM 11121 / KW20 / Rd) protein is Anthranilate synthase component 1 (trpE).